The sequence spans 331 residues: DNA-directed RNA polymerase subunit alpha (331 aa).

Residues 1–233 are alpha N-terminal domain (alpha-NTD); that stretch reads MVREEIAVST…DLFLPFLHAE (233 aa). The tract at residues 268–331 is alpha C-terminal domain (alpha-CTD); the sequence is ALKRVFIDQS…GILQKRFAID (64 aa).

The protein belongs to the RNA polymerase alpha chain family. In terms of assembly, in plastids the minimal PEP RNA polymerase catalytic core is composed of four subunits: alpha, beta, beta', and beta''. When a (nuclear-encoded) sigma factor is associated with the core the holoenzyme is formed, which can initiate transcription.

It is found in the plastid. The protein localises to the chloroplast. The catalysed reaction is RNA(n) + a ribonucleoside 5'-triphosphate = RNA(n+1) + diphosphate. Its function is as follows. DNA-dependent RNA polymerase catalyzes the transcription of DNA into RNA using the four ribonucleoside triphosphates as substrates. The polypeptide is DNA-directed RNA polymerase subunit alpha (Illicium oligandrum (Star anise)).